Reading from the N-terminus, the 373-residue chain is Bifunctional enzyme IspD/IspF (373 aa).

A 2-C-methyl-D-erythritol 4-phosphate cytidylyltransferase region spans residues 1-212 (MPDITLILLG…PCIEAPSGKT (212 aa)). The interval 213 to 373 (LTGFGLDIHP…NLTYYNWKQK (161 aa)) is 2-C-methyl-D-erythritol 2,4-cyclodiphosphate synthase. A divalent metal cation is bound by residues D219 and H221. 4-CDP-2-C-methyl-D-erythritol 2-phosphate-binding positions include 219-221 (DIH) and 245-246 (HS). H253 serves as a coordination point for a divalent metal cation. 4-CDP-2-C-methyl-D-erythritol 2-phosphate is bound by residues 267–269 (DIG), 272–276 (YPDTD), 343–346 (TTAE), F350, and R353.

The protein in the N-terminal section; belongs to the IspD/TarI cytidylyltransferase family. IspD subfamily. It in the C-terminal section; belongs to the IspF family. Requires a divalent metal cation as cofactor.

The catalysed reaction is 2-C-methyl-D-erythritol 4-phosphate + CTP + H(+) = 4-CDP-2-C-methyl-D-erythritol + diphosphate. The enzyme catalyses 4-CDP-2-C-methyl-D-erythritol 2-phosphate = 2-C-methyl-D-erythritol 2,4-cyclic diphosphate + CMP. Its pathway is isoprenoid biosynthesis; isopentenyl diphosphate biosynthesis via DXP pathway; isopentenyl diphosphate from 1-deoxy-D-xylulose 5-phosphate: step 2/6. The protein operates within isoprenoid biosynthesis; isopentenyl diphosphate biosynthesis via DXP pathway; isopentenyl diphosphate from 1-deoxy-D-xylulose 5-phosphate: step 4/6. In terms of biological role, bifunctional enzyme that catalyzes the formation of 4-diphosphocytidyl-2-C-methyl-D-erythritol from CTP and 2-C-methyl-D-erythritol 4-phosphate (MEP) (IspD), and catalyzes the conversion of 4-diphosphocytidyl-2-C-methyl-D-erythritol 2-phosphate (CDP-ME2P) to 2-C-methyl-D-erythritol 2,4-cyclodiphosphate (ME-CPP) with a corresponding release of cytidine 5-monophosphate (CMP) (IspF). The sequence is that of Bifunctional enzyme IspD/IspF from Sulfurovum sp. (strain NBC37-1).